A 201-amino-acid chain; its full sequence is 3-isopropylmalate dehydratase small subunit (201 aa).

The protein belongs to the LeuD family. LeuD type 1 subfamily. Heterodimer of LeuC and LeuD.

The catalysed reaction is (2R,3S)-3-isopropylmalate = (2S)-2-isopropylmalate. It participates in amino-acid biosynthesis; L-leucine biosynthesis; L-leucine from 3-methyl-2-oxobutanoate: step 2/4. Catalyzes the isomerization between 2-isopropylmalate and 3-isopropylmalate, via the formation of 2-isopropylmaleate. The protein is 3-isopropylmalate dehydratase small subunit of Parvibaculum lavamentivorans (strain DS-1 / DSM 13023 / NCIMB 13966).